The sequence spans 560 residues: Digoxin reductase (560 aa).

The segment at residues 1–48 (MEYGKCRGIERGMGRRDFLKAATLLGATAAGAGMLAGCAPKSASEAQA) is a signal peptide (tat-type signal).

This sequence belongs to the FAD-dependent oxidoreductase 2 family. May form a membrane-associated complex with Cgr1. The cofactor is FAD. Requires [4Fe-4S] cluster as cofactor. Post-translationally, predicted to be exported by the Tat system. The position of the signal peptide cleavage has not been experimentally proven.

It localises to the cell membrane. The enzyme catalyses digoxin + 2 Fe(II)-[cytochrome c] + 3 H(+) = dihydrodigoxin + 2 Fe(III)-[cytochrome c]. It catalyses the reaction digitoxin + 2 Fe(II)-[cytochrome c] + 3 H(+) = dihydrodigitoxin + 2 Fe(III)-[cytochrome c]. The catalysed reaction is digoxigenin + 2 Fe(II)-[cytochrome c] + 3 H(+) = dihydrodigoxigenin + 2 Fe(III)-[cytochrome c]. It carries out the reaction ouabain + 2 Fe(II)-[cytochrome c] + 3 H(+) = dihydroouabain + 2 Fe(III)-[cytochrome c]. The enzyme catalyses ouabagenin + 2 Fe(II)-[cytochrome c] + 3 H(+) = dihydroouabagenin + 2 Fe(III)-[cytochrome c]. Functionally, involved in the inactivation of the cardiac medication and plant natural product digoxin, thus decreasing drug efficacy and toxicity. Catalyzes the reduction of the alpha,beta-unsaturated butyrolactone ring of digoxin to the inactive metabolite dihydrodigoxin. Likely uses the cytochrome Cgr1 as the physiological electron donor, encoded by the adjacent gene in the locus. Only reduces digoxin and other cardenolide toxins, such as digitoxin, digoxigenin, ouabain and ouabagenin. Therefore is a specialized enzyme present in some gut bacteria E.lenta that protects their human host against ingested plant toxins. The sequence is that of Digoxin reductase from Eggerthella lenta (strain ATCC 25559 / DSM 2243 / CCUG 17323 / JCM 9979 / KCTC 3265 / NCTC 11813 / VPI 0255 / 1899 B) (Eubacterium lentum).